Reading from the N-terminus, the 252-residue chain is Flap endonuclease Xni (252 aa).

Aspartate 105 contacts Mg(2+). A 5'-3' exonuclease domain is found at 162–250; the sequence is ERTQFIDYLA…LNANLSQFRL (89 aa). 5 residues coordinate K(+): leucine 172, alanine 173, proline 181, valine 183, and isoleucine 186. The interaction with DNA stretch occupies residues 185–190; sequence GIGPKS.

The protein belongs to the Xni family. Mg(2+) is required as a cofactor. The cofactor is K(+).

Has flap endonuclease activity. During DNA replication, flap endonucleases cleave the 5'-overhanging flap structure that is generated by displacement synthesis when DNA polymerase encounters the 5'-end of a downstream Okazaki fragment. The chain is Flap endonuclease Xni from Shewanella woodyi (strain ATCC 51908 / MS32).